Here is a 209-residue protein sequence, read N- to C-terminus: Protein GrpE (209 aa).

Positions 1-13 (MSNDSSKAKQNQV) are enriched in polar residues. Residues 1-33 (MSNDSSKAKQNQVDEAVEGEILTESEVETGNDE) form a disordered region. Acidic residues predominate over residues 15-31 (EAVEGEILTESEVETGN).

The protein belongs to the GrpE family. In terms of assembly, homodimer.

It localises to the cytoplasm. In terms of biological role, participates actively in the response to hyperosmotic and heat shock by preventing the aggregation of stress-denatured proteins, in association with DnaK and GrpE. It is the nucleotide exchange factor for DnaK and may function as a thermosensor. Unfolded proteins bind initially to DnaJ; upon interaction with the DnaJ-bound protein, DnaK hydrolyzes its bound ATP, resulting in the formation of a stable complex. GrpE releases ADP from DnaK; ATP binding to DnaK triggers the release of the substrate protein, thus completing the reaction cycle. Several rounds of ATP-dependent interactions between DnaJ, DnaK and GrpE are required for fully efficient folding. In Shewanella woodyi (strain ATCC 51908 / MS32), this protein is Protein GrpE.